Here is a 525-residue protein sequence, read N- to C-terminus: Ribonuclease III domain-containing protein RNC1, chloroplastic (525 aa).

The N-terminal 28 residues, 1–28, are a transit peptide targeting the chloroplast; sequence MGPPAMAFQALTLTPLPFSLHSSSRRVR. RNase III domains are found at residues 125–271 and 403–503; these read LLEA…LCFG and EHPR…CVYG.

In terms of assembly, interacts with RNA. Part of large ribonucleo-protein particles that contain CAF1 and/or CAF2.

The protein localises to the plastid. It localises to the chloroplast stroma. Functionally, binds specific group II introns in chloroplasts and facilitates their splicing. Acts on both subgroup IIA and subgroup IIB introns. The substrates of the subgroup II also require the CRM domain proteins CAF1 or CAF2. Binds both single-stranded and double-stranded RNA non-specifically, but lacks endonuclease activity. Required for plastid ribosome biogenesis. This is Ribonuclease III domain-containing protein RNC1, chloroplastic from Zea mays (Maize).